Here is a 298-residue protein sequence, read N- to C-terminus: Glycine--tRNA ligase alpha subunit (298 aa).

Belongs to the class-II aminoacyl-tRNA synthetase family. As to quaternary structure, tetramer of two alpha and two beta subunits.

The protein resides in the cytoplasm. It catalyses the reaction tRNA(Gly) + glycine + ATP = glycyl-tRNA(Gly) + AMP + diphosphate. The protein is Glycine--tRNA ligase alpha subunit of Neisseria meningitidis serogroup C / serotype 2a (strain ATCC 700532 / DSM 15464 / FAM18).